A 778-amino-acid polypeptide reads, in one-letter code: Semaphorin-3ab (778 aa).

The N-terminal stretch at 1 to 17 (MDYLWWIVLLIWTLIAP) is a signal peptide. One can recognise a Sema domain in the interval 32-515 (RLKPSYKEML…SAIGVSQMPL (484 aa)). Residue Asn-54 is glycosylated (N-linked (GlcNAc...) asparagine). Cys-105 and Cys-116 are oxidised to a cystine. N-linked (GlcNAc...) asparagine glycosylation occurs at Asn-127. Intrachain disulfides connect Cys-134–Cys-143, Cys-270–Cys-382, Cys-294–Cys-342, and Cys-518–Cys-536. Positions 579–668 (GEAGLLDKTV…FIQTLLRLTL (90 aa)) constitute an Ig-like C2-type domain. N-linked (GlcNAc...) asparagine glycosylation is present at Asn-593. A disulfide bridge connects residues Cys-652 and Cys-716. The disordered stretch occupies residues 727–778 (RRQKANLLHASQSHTSQILHSSQSHAKWKLLQENKKGRNRRTHEMQRAPRSV). The segment covering 735-751 (HASQSHTSQILHSSQSH) has biased composition (polar residues). Positions 756–778 (LLQENKKGRNRRTHEMQRAPRSV) are enriched in basic and acidic residues.

This sequence belongs to the semaphorin family. As to expression, expressed in rhombomeres three and five, and in the posterior half of newly formed somites which is avoided by ventrally extending motor axons.

It localises to the secreted. Functionally, might normally influence the midsegmental pathway choice of the ventrally extending motor axons by contributing to a repulsive domain in the posterior somite. The chain is Semaphorin-3ab (sema3ab) from Danio rerio (Zebrafish).